The chain runs to 226 residues: Large ribosomal subunit protein uL1 (226 aa).

Belongs to the universal ribosomal protein uL1 family. In terms of assembly, part of the 50S ribosomal subunit.

Binds directly to 23S rRNA. The L1 stalk is quite mobile in the ribosome, and is involved in E site tRNA release. In terms of biological role, protein L1 is also a translational repressor protein, it controls the translation of the L11 operon by binding to its mRNA. This chain is Large ribosomal subunit protein uL1, found in Mycoplasma pneumoniae (strain ATCC 29342 / M129 / Subtype 1) (Mycoplasmoides pneumoniae).